The sequence spans 1282 residues: Trafficking protein particle complex subunit 8 (1282 aa).

The tract at residues 245–287 is disordered; that stretch reads TDAIAPGPNGASNQQSPSSPTSSVATISSTMPAVGSVSPNSHP. Positions 255–273 are enriched in low complexity; it reads ASNQQSPSSPTSSVATISS.

Functionally, plays a role in endoplasmic reticulum to Golgi apparatus trafficking at a very early stage. Involved in collagen secretion. In Caenorhabditis elegans, this protein is Trafficking protein particle complex subunit 8.